The sequence spans 256 residues: Trans-aconitate 2-methyltransferase (256 aa).

Belongs to the methyltransferase superfamily. Tam family.

It is found in the cytoplasm. The catalysed reaction is trans-aconitate + S-adenosyl-L-methionine = (E)-3-(methoxycarbonyl)pent-2-enedioate + S-adenosyl-L-homocysteine. Functionally, catalyzes the S-adenosylmethionine monomethyl esterification of trans-aconitate. The polypeptide is Trans-aconitate 2-methyltransferase (Rhizobium etli (strain ATCC 51251 / DSM 11541 / JCM 21823 / NBRC 15573 / CFN 42)).